Here is a 116-residue protein sequence, read N- to C-terminus: NADH-ubiquinone oxidoreductase chain 3 (116 aa).

3 consecutive transmembrane segments (helical) span residues 4–24, 56–76, and 88–108; these read IIFL…AAHA, FFLV…LFPL, and LIPI…FEWI.

This sequence belongs to the complex I subunit 3 family.

It is found in the mitochondrion membrane. The catalysed reaction is a ubiquinone + NADH + 5 H(+)(in) = a ubiquinol + NAD(+) + 4 H(+)(out). Core subunit of the mitochondrial membrane respiratory chain NADH dehydrogenase (Complex I) that is believed to belong to the minimal assembly required for catalysis. Complex I functions in the transfer of electrons from NADH to the respiratory chain. The immediate electron acceptor for the enzyme is believed to be ubiquinone. The protein is NADH-ubiquinone oxidoreductase chain 3 (ND3) of Strongylocentrotus purpuratus (Purple sea urchin).